A 652-amino-acid polypeptide reads, in one-letter code: Tetracycline resistance protein TetP (652 aa).

The region spanning K2 to D252 is the tr-type G domain. GTP contacts are provided by residues A11–T18, D75–H79, and N129–D132.

This sequence belongs to the TRAFAC class translation factor GTPase superfamily. Classic translation factor GTPase family. TetM/TetO subfamily.

Abolishes the inhibitory effect of tetracyclin on protein synthesis by a non-covalent modification of the ribosomes. In Clostridium perfringens, this protein is Tetracycline resistance protein TetP (tetP).